We begin with the raw amino-acid sequence, 55 residues long: Large ribosomal subunit protein bL33B (55 aa).

It belongs to the bacterial ribosomal protein bL33 family.

The polypeptide is Large ribosomal subunit protein bL33B (rpmG2) (Mycobacterium tuberculosis (strain CDC 1551 / Oshkosh)).